The primary structure comprises 166 residues: Large ribosomal subunit protein uL10 (166 aa).

It belongs to the universal ribosomal protein uL10 family. As to quaternary structure, part of the ribosomal stalk of the 50S ribosomal subunit. The N-terminus interacts with L11 and the large rRNA to form the base of the stalk. The C-terminus forms an elongated spine to which L12 dimers bind in a sequential fashion forming a multimeric L10(L12)X complex.

Its function is as follows. Forms part of the ribosomal stalk, playing a central role in the interaction of the ribosome with GTP-bound translation factors. The sequence is that of Large ribosomal subunit protein uL10 from Streptococcus equi subsp. zooepidemicus (strain MGCS10565).